The primary structure comprises 152 residues: uncharacterized protein (152 aa).

An N-terminal signal peptide occupies residues 1–16; sequence MRKLLISLALAIPVFA. A Cytochrome c domain is found at 20–135; sequence NLLQKGYEVY…AVAYWLYHNY (116 aa). Residues Cys-33, Cys-36, and His-37 each coordinate heme c.

This is an uncharacterized protein from Aquifex aeolicus (strain VF5).